A 235-amino-acid polypeptide reads, in one-letter code: Retron Ec48 transmembrane protein (235 aa).

The next 2 helical transmembrane spans lie at I11 to I31 and A64 to T84.

Its subcellular location is the cell inner membrane. Functionally, membrane component of antiviral defense system Retron Ec48, composed of a non-coding RNA (ncRNA), a reverse transcriptase (RT) and this membrane protein. Expression of this retron confers protection against bacteriophages lambda, T2, T4, T5 and T7. At multiplicity of infection (MOI) of 0.02 cultures grow normally when infected with lambda without collapsing, at MOI 2 cultures enter growth stasis. At MOI 3 cell membranes are permeabilized within 15 minutes of infection but do not lyse, suggesting the phage are not able to finish a replication cycle. Antiviral defense is suppressed by mutations that knockout the lambda gam expression or phage T7 gp5.9 expression; both viral genes inhibit host RecBCD. The Ec48 retron may sense the integrity of the RecBCD enzyme; when RecBCD is perturbed by viral proteins the Ec48 effector (the membrane protein) is activated, leading to abortive infection and bacterial growth arrest. This is Retron Ec48 transmembrane protein from Escherichia coli.